The following is a 248-amino-acid chain: MSSAPNGRKNRPRTAGTIFQIGGKAPSRESERRESSEALLAVSDCRMVVQEFNTLVALYRELVISIGEISADCPSLRAEMHKTRTKGCEMARTAHQNLSAISGPEDGEIHPEICRLFIQLQCCLEMYLTEMLKSVCLLGSLQLHRKGKHYLGATKLDSRKEDSSDIPILEDTSSTPPDCPHTYFLVATDIENIERDMTEMKNLLSKLRETMPLPLKNQDDSSLLNLAPYPMVRQRKRRFFGLCCLVSS.

The tract at residues 1-32 (MSSAPNGRKNRPRTAGTIFQIGGKAPSRESER) is disordered. 2 S-palmitoyl cysteine lipidation sites follow: Cys-243 and Cys-244.

The protein belongs to the RGS7BP/RGS9BP family. Post-translationally, palmitoylated. Undergoes rapid palmitoylation turnover. Palmitoylation regulates the cell membrane and nuclear shuttling and the regulation of GPCR signaling. Upon depalmitoylation, it is targeted from the plasma membrane into the nucleus. GPCR signaling inhibits depalmitoylation and promotes localization to the plasma membrane.

It is found in the nucleus. The protein localises to the cytoplasm. The protein resides in the cell membrane. In terms of biological role, regulator of G protein-coupled receptor (GPCR) signaling. Regulatory subunit of the R7-Gbeta5 complexes that acts by controlling the subcellular location of the R7-Gbeta5 complexes. When palmitoylated, it targets the R7-Gbeta5 complexes to the plasma membrane, leading to inhibit G protein alpha subunits. When it is unpalmitoylated, the R7-Gbeta5 complexes undergo a nuclear/cytoplasmic shuttling. The chain is Regulator of G-protein signaling 7-binding protein A (rgs7bpa) from Danio rerio (Zebrafish).